The primary structure comprises 172 residues: ADDKNPLEECFREADYEEFLEIAKVTVLEASERNDKEDWYANLGPMRLPEKLNEFVQETENGWYFIKYPVKPSEEGKSAGQLYEESLRKSAGQLYQESLGKAHDDIFAYEKRFDEIVDGMDKLPTSMYQAIQERINFKPPLPPKKYAMGAITTFTPYQFQHFSEALTAPVGR.

An FAD-binding site is contributed by 44–47 (GPMR). The substrate site is built by R47 and H103.

The protein belongs to the flavin monoamine oxidase family. FIG1 subfamily. In terms of assembly, heterodimer; non-covalently linked. Requires FAD as cofactor. In terms of processing, N-glycosylated. Expressed by the venom gland.

The protein resides in the secreted. It carries out the reaction an L-alpha-amino acid + O2 + H2O = a 2-oxocarboxylate + H2O2 + NH4(+). It catalyses the reaction L-leucine + O2 + H2O = 4-methyl-2-oxopentanoate + H2O2 + NH4(+). The enzyme catalyses L-phenylalanine + O2 + H2O = 3-phenylpyruvate + H2O2 + NH4(+). The catalysed reaction is L-tryptophan + O2 + H2O = indole-3-pyruvate + H2O2 + NH4(+). It carries out the reaction L-methionine + O2 + H2O = 4-methylsulfanyl-2-oxobutanoate + H2O2 + NH4(+). It catalyses the reaction L-isoleucine + O2 + H2O = (S)-3-methyl-2-oxopentanoate + H2O2 + NH4(+). The enzyme catalyses L-arginine + O2 + H2O = 5-guanidino-2-oxopentanoate + H2O2 + NH4(+). The catalysed reaction is L-tyrosine + O2 + H2O = 3-(4-hydroxyphenyl)pyruvate + H2O2 + NH4(+). With respect to regulation, activity is increased by Mn(2+) ions. Inhibited by Zn(2+), Ni(2+), Co(2+), Cu(2+) and Al(3+). No significant activity change by Na(+), K(+), Ca(2+), Mg(2+) and Ba(2+) ions. Both isoform are completely inhibited by L-Cys and reduced glutathione. O-phenanthroline, beta-mercaptoethanol and PMSF completely inhibit the enzymatic activity of LAAOII, but have no activity on LAAOI. Iodoacetic acid inhibits the enzymatic activity of LAAOII by 46% but has no effect on the LAAOI activity. In terms of biological role, catalyzes an oxidative deamination of predominantly hydrophobic and aromatic L-amino acids, thus producing hydrogen peroxide that may contribute to the diverse toxic effects of this enzyme. Shows high specificity for L-Arg, L-Met, L-Phe, L-Leu, L-Tyr, L-Ile and L-Trp, low specificity for L-Val, L-Ala, L-Asn, L-Gln, and no specificity for L-Pro, L-Ser, L-Thr, L-Cys, L-Gly and L-Asp. Exhibits diverse biological activities, such as hemorrhage, hemolysis, edema, antibacterial and antiparasitic activities, as well as regulation of platelet aggregation. Its effect on platelets is controversial, since it either induces aggregation or inhibits agonist-induced aggregation. These different effects are probably due to different experimental conditions. The chain is L-amino acid oxidase from Cerastes cerastes (Horned desert viper).